The chain runs to 585 residues: Cytochrome c lysine N-methyltransferase 1 (585 aa).

The 256-residue stretch at 18 to 273 (KSLSLKPSTI…KPIEVFISYS (256 aa)) folds into the SET domain. Positions 186–288 (LNLSDIKHLY…FSMLVTYGFT (103 aa)) are SET-like.

Belongs to the class V-like SAM-binding methyltransferase superfamily.

The protein localises to the cytoplasm. The protein resides in the cytosol. The enzyme catalyses L-lysyl-[cytochrome c] + S-adenosyl-L-methionine = N(6)-methyl-L-lysyl-[cytochrome c] + S-adenosyl-L-homocysteine + H(+). Its function is as follows. Methyltransferase which mediates trimethylation of 'Lys-78' of cytochrome c (CYC1). The chain is Cytochrome c lysine N-methyltransferase 1 (CTM1) from Saccharomyces cerevisiae (strain ATCC 204508 / S288c) (Baker's yeast).